The chain runs to 416 residues: 4-hydroxy-3-methylbut-2-en-1-yl diphosphate synthase (flavodoxin) (416 aa).

4 residues coordinate [4Fe-4S] cluster: cysteine 304, cysteine 307, cysteine 350, and glutamate 357.

It belongs to the IspG family. [4Fe-4S] cluster serves as cofactor.

It carries out the reaction (2E)-4-hydroxy-3-methylbut-2-enyl diphosphate + oxidized [flavodoxin] + H2O + 2 H(+) = 2-C-methyl-D-erythritol 2,4-cyclic diphosphate + reduced [flavodoxin]. Its pathway is isoprenoid biosynthesis; isopentenyl diphosphate biosynthesis via DXP pathway; isopentenyl diphosphate from 1-deoxy-D-xylulose 5-phosphate: step 5/6. Its function is as follows. Converts 2C-methyl-D-erythritol 2,4-cyclodiphosphate (ME-2,4cPP) into 1-hydroxy-2-methyl-2-(E)-butenyl 4-diphosphate. The chain is 4-hydroxy-3-methylbut-2-en-1-yl diphosphate synthase (flavodoxin) from Rhizobium etli (strain ATCC 51251 / DSM 11541 / JCM 21823 / NBRC 15573 / CFN 42).